Reading from the N-terminus, the 425-residue chain is Serine--tRNA ligase (425 aa).

231 to 233 (TAE) contributes to the L-serine binding site. An ATP-binding site is contributed by 262-264 (RSE). An L-serine-binding site is contributed by Glu285. 349–352 (EISS) lines the ATP pocket. An L-serine-binding site is contributed by Ser385.

It belongs to the class-II aminoacyl-tRNA synthetase family. Type-1 seryl-tRNA synthetase subfamily. In terms of assembly, homodimer. The tRNA molecule binds across the dimer.

The protein resides in the cytoplasm. It catalyses the reaction tRNA(Ser) + L-serine + ATP = L-seryl-tRNA(Ser) + AMP + diphosphate + H(+). It carries out the reaction tRNA(Sec) + L-serine + ATP = L-seryl-tRNA(Sec) + AMP + diphosphate + H(+). The protein operates within aminoacyl-tRNA biosynthesis; selenocysteinyl-tRNA(Sec) biosynthesis; L-seryl-tRNA(Sec) from L-serine and tRNA(Sec): step 1/1. Functionally, catalyzes the attachment of serine to tRNA(Ser). Is also able to aminoacylate tRNA(Sec) with serine, to form the misacylated tRNA L-seryl-tRNA(Sec), which will be further converted into selenocysteinyl-tRNA(Sec). The protein is Serine--tRNA ligase of Desulfosudis oleivorans (strain DSM 6200 / JCM 39069 / Hxd3) (Desulfococcus oleovorans).